The primary structure comprises 89 residues: Small ribosomal subunit protein uS19 (89 aa).

Belongs to the universal ribosomal protein uS19 family.

In terms of biological role, protein S19 forms a complex with S13 that binds strongly to the 16S ribosomal RNA. The polypeptide is Small ribosomal subunit protein uS19 (Porphyromonas gingivalis (strain ATCC 33277 / DSM 20709 / CIP 103683 / JCM 12257 / NCTC 11834 / 2561)).